Consider the following 436-residue polypeptide: 3-ketoacyl-CoA thiolase (436 aa).

Cys-99 functions as the Acyl-thioester intermediate in the catalytic mechanism. Catalysis depends on proton acceptor residues His-392 and Cys-422.

It belongs to the thiolase-like superfamily. Thiolase family. Heterotetramer of two alpha chains (FadJ) and two beta chains (FadI).

The protein resides in the cytoplasm. It catalyses the reaction an acyl-CoA + acetyl-CoA = a 3-oxoacyl-CoA + CoA. It functions in the pathway lipid metabolism; fatty acid beta-oxidation. In terms of biological role, catalyzes the final step of fatty acid oxidation in which acetyl-CoA is released and the CoA ester of a fatty acid two carbons shorter is formed. The sequence is that of 3-ketoacyl-CoA thiolase from Aeromonas salmonicida (strain A449).